Consider the following 117-residue polypeptide: Large ribosomal subunit protein bL20 (117 aa).

Belongs to the bacterial ribosomal protein bL20 family.

Binds directly to 23S ribosomal RNA and is necessary for the in vitro assembly process of the 50S ribosomal subunit. It is not involved in the protein synthesizing functions of that subunit. This Rickettsia africae (strain ESF-5) protein is Large ribosomal subunit protein bL20.